A 309-amino-acid chain; its full sequence is Manganese-dependent inorganic pyrophosphatase (309 aa).

His9, Asp13, Asp15, Asp75, His97, and Asp149 together coordinate Mn(2+).

As to quaternary structure, homodimer. Requires Mn(2+) as cofactor.

The protein localises to the cytoplasm. The catalysed reaction is diphosphate + H2O = 2 phosphate + H(+). The polypeptide is Manganese-dependent inorganic pyrophosphatase (ppaC) (Bacillus subtilis (strain 168)).